The chain runs to 434 residues: MIWEIPIIGDFITKPFKAAKLYEFYDRLHLFTVYLLGFFVLLTGAKQHFGNPIDCMLPKQHDDLKSWRDYIHNFCLFYGTFRYDVSNGTSEFGSYTEDASVNYYQWVPFFFAFQVCCFLLPFWCWAYMQKLIYIDMAFIVDYSGKINSEKTFEKTKEKVDRIVNYMHDHFKFRRAHKMGYLSWITFNSAFPSVLYSLTKLFFITNVIIQVNLVCKFLDVDSWTWGFDLLGKFIHPTPRAPEFSSFSDKQRFAAILTDGSYNRFQYFPILVGCEYQLQESVSNFVNHKAQCIIPMNVINEKIFIGLYFWLLVLTALSVIGTVKWILRIKSKKLNEVMIYKLIKKSLEREPFDSNIHDHRYNFVHKYLCADGILLIYFMMDTNGFLKTEEVIGALFKKYCSDAGLEPLQTAPTLTSSPRDLAYSETNYGFAAPQKI.

4 helical membrane passes run 30-50, 106-126, 301-321, and 365-385; these read LFTV…QHFG, WVPF…WCWA, IFIG…IGTV, and YLCA…GFLK.

The protein belongs to the pannexin family.

It is found in the cell membrane. It localises to the cell junction. Its subcellular location is the gap junction. Its function is as follows. Structural component of the gap junctions. The protein is Innexin-14 (inx-14) of Caenorhabditis elegans.